Here is a 294-residue protein sequence, read N- to C-terminus: 33 kDa chaperonin (294 aa).

2 disulfides stabilise this stretch: Cys-239/Cys-241 and Cys-272/Cys-275.

Belongs to the HSP33 family. In terms of processing, under oxidizing conditions two disulfide bonds are formed involving the reactive cysteines. Under reducing conditions zinc is bound to the reactive cysteines and the protein is inactive.

Its subcellular location is the cytoplasm. In terms of biological role, redox regulated molecular chaperone. Protects both thermally unfolding and oxidatively damaged proteins from irreversible aggregation. Plays an important role in the bacterial defense system toward oxidative stress. In Listeria monocytogenes serovar 1/2a (strain ATCC BAA-679 / EGD-e), this protein is 33 kDa chaperonin.